A 354-amino-acid polypeptide reads, in one-letter code: Thiamine thiazole synthase (354 aa).

Substrate-binding positions include A83, 104-105 (EA), G112, and V177. 2,3-didehydroalanine (Cys) is present on C210. Substrate contacts are provided by residues D212, H227, M305, and 315–317 (RMR).

Belongs to the THI4 family. Homooctamer. Requires Fe cation as cofactor. During the catalytic reaction, a sulfide is transferred from Cys-210 to a reaction intermediate, generating a dehydroalanine residue.

It is found in the cytoplasm. The protein resides in the nucleus. It catalyses the reaction [ADP-thiazole synthase]-L-cysteine + glycine + NAD(+) = [ADP-thiazole synthase]-dehydroalanine + ADP-5-ethyl-4-methylthiazole-2-carboxylate + nicotinamide + 3 H2O + 2 H(+). Its function is as follows. Involved in biosynthesis of the thiamine precursor thiazole. Catalyzes the conversion of NAD and glycine to adenosine diphosphate 5-(2-hydroxyethyl)-4-methylthiazole-2-carboxylic acid (ADT), an adenylated thiazole intermediate. The reaction includes an iron-dependent sulfide transfer from a conserved cysteine residue of the protein to a thiazole intermediate. The enzyme can only undergo a single turnover, which suggests it is a suicide enzyme. May have additional roles in adaptation to various stress conditions and in DNA damage tolerance. This Candida albicans (strain WO-1) (Yeast) protein is Thiamine thiazole synthase.